The primary structure comprises 222 residues: Ethylene-inducing xylanase 2 (222 aa).

The signal sequence occupies residues 1-19 (MITFSSLLVTFSAISTSLA). The region spanning 36–222 (QRNESSLVRR…GEGAATQTVS (187 aa)) is the GH11 domain. N-linked (GlcNAc...) asparagine glycans are attached at residues N38 and N94. Catalysis depends on E120, which acts as the Nucleophile. The active-site Proton donor is the E209.

This sequence belongs to the glycosyl hydrolase 11 (cellulase G) family.

The catalysed reaction is Endohydrolysis of (1-&gt;4)-beta-D-xylosidic linkages in xylans.. It functions in the pathway glycan degradation; xylan degradation. Functionally, endo-1,4-beta-xylanase involved in the hydrolysis of xylan, a major structural heterogeneous polysaccharide found in plant biomass representing the second most abundant polysaccharide in the biosphere, after cellulose. May act as an elicitor of plant defense responses in certain plants but does not exhibit any cell death when transiently expressed in N.benthamiana. This Botryotinia fuckeliana (strain B05.10) (Noble rot fungus) protein is Ethylene-inducing xylanase 2.